Consider the following 88-residue polypeptide: Small ribosomal subunit protein uS17 (88 aa).

This sequence belongs to the universal ribosomal protein uS17 family. As to quaternary structure, part of the 30S ribosomal subunit.

Functionally, one of the primary rRNA binding proteins, it binds specifically to the 5'-end of 16S ribosomal RNA. The polypeptide is Small ribosomal subunit protein uS17 (Ectopseudomonas mendocina (strain ymp) (Pseudomonas mendocina)).